A 213-amino-acid polypeptide reads, in one-letter code: Kynurenine formamidase (213 aa).

Position 20 (Trp-20) interacts with substrate. Zn(2+) is bound by residues His-50, His-54, and Asp-56. His-60 serves as the catalytic Proton donor/acceptor. Zn(2+) contacts are provided by His-161 and Glu-173.

This sequence belongs to the Cyclase 1 superfamily. KynB family. As to quaternary structure, homodimer. The cofactor is Zn(2+).

The catalysed reaction is N-formyl-L-kynurenine + H2O = L-kynurenine + formate + H(+). It participates in amino-acid degradation; L-tryptophan degradation via kynurenine pathway; L-kynurenine from L-tryptophan: step 2/2. Its function is as follows. Catalyzes the hydrolysis of N-formyl-L-kynurenine to L-kynurenine, the second step in the kynurenine pathway of tryptophan degradation. In Pseudomonas aeruginosa (strain UCBPP-PA14), this protein is Kynurenine formamidase.